The chain runs to 582 residues: Pineapple eye protein (582 aa).

A C2HC pre-PHD-type zinc finger spans residues 6–44 (ELQCLICKYSDTDDLVFGEWMIVRNLQVHYFCLLLSTHL). An extended PHD domain (ePHD) region spans residues 6–119 (ELQCLICKYS…QYKSYCYKCR (114 aa)). Residues 72 to 119 (RKCWYCNKIGASLQCDRCRSLFHLKCGLENRAVFEFCGQYKSYCYKCR) form a PHD-type; atypical zinc finger. Disordered regions lie at residues 292–311 (PART…DGSF) and 323–422 (RSLT…ASEI). Positions 340 to 363 (SSNITVIFSQPKSNATSERLSLSP) are enriched in polar residues. Positions 383 to 399 (SIDENHSPQPIARRDTS) are enriched in basic and acidic residues.

In terms of biological role, required for survival of imaginal disk cells possibly by regulation of cell apoptosis. Required for germline stem cell self-renewal through mediation of BMP signaling. The polypeptide is Pineapple eye protein (Drosophila melanogaster (Fruit fly)).